We begin with the raw amino-acid sequence, 85 residues long: Scratcher peptide (85 aa).

Residues methionine 1–proline 24 form the signal peptide. A propeptide spanning residues glycine 25–phenylalanine 38 is cleaved from the precursor. Glutamate 47 carries the post-translational modification 4-carboxyglutamate. Aspartate 67 carries the aspartic acid 1-amide modification. Residues lysine 68–methionine 85 constitute a propeptide that is removed on maturation.

Belongs to the conotoxin J superfamily. In terms of processing, contains 2 disulfide bonds. In terms of tissue distribution, expressed by the venom duct.

The protein resides in the secreted. Causes scratching in mice. This Conus geographus (Geography cone) protein is Scratcher peptide.